A 916-amino-acid polypeptide reads, in one-letter code: Probable serine/threonine-protein kinase DDB_G0267514 (916 aa).

Disordered stretches follow at residues Ser-283 to Ser-311, Asn-461 to Asp-518, and Phe-550 to Ser-646. Low complexity-rich tracts occupy residues Asn-461–Pro-493 and Phe-550–Asn-622. Residues His-623–Ser-646 show a composition bias toward polar residues. A Protein kinase domain is found at Leu-662–Pro-916. ATP contacts are provided by residues Leu-668–Val-676 and Lys-689. The active-site Proton acceptor is the Asp-784.

The protein belongs to the protein kinase superfamily. TKL Ser/Thr protein kinase family.

It carries out the reaction L-seryl-[protein] + ATP = O-phospho-L-seryl-[protein] + ADP + H(+). The enzyme catalyses L-threonyl-[protein] + ATP = O-phospho-L-threonyl-[protein] + ADP + H(+). The polypeptide is Probable serine/threonine-protein kinase DDB_G0267514 (Dictyostelium discoideum (Social amoeba)).